Reading from the N-terminus, the 175-residue chain is RNA pyrophosphohydrolase (175 aa).

The Nudix hydrolase domain maps to 6–149 (GYRPNVGIIL…KRQVYQQALT (144 aa)). Positions 38 to 59 (GGIKHGESPEQAMYRELYEEVG) match the Nudix box motif.

The protein belongs to the Nudix hydrolase family. RppH subfamily. It depends on a divalent metal cation as a cofactor.

Accelerates the degradation of transcripts by removing pyrophosphate from the 5'-end of triphosphorylated RNA, leading to a more labile monophosphorylated state that can stimulate subsequent ribonuclease cleavage. In Azoarcus sp. (strain BH72), this protein is RNA pyrophosphohydrolase.